Reading from the N-terminus, the 890-residue chain is Possible lysine-specific histone demethylase 1 (890 aa).

Residues 1–13 are compositionally biased toward polar residues; sequence MKPTQFGGSSSKM. Residues 1–164 form a disordered region; the sequence is MKPTQFGGSS…TVLSGQEGAV (164 aa). Phosphoserine is present on residues S24 and S27. The segment covering 84-109 has biased composition (polar residues); the sequence is NRPSGSGDTASNDKSGSASMGPNNQQ. The segment covering 110-122 has biased composition (basic and acidic residues); sequence AERRSQSQTRKSE. Residues 123–138 are compositionally biased toward low complexity; that stretch reads ANATSSSVSGPSAGNS. Positions 160–259 constitute an SWIRM domain; sequence QEGAVFQSRL…FGIFKRLKPI (100 aa). 267-295 provides a ligand contact to FAD; the sequence is VIVIGAGISGLAVAHQLQQFGMDVIVLEA. Residues 860–890 are disordered; that stretch reads DLSPNLSDSSPSSKKSEENSNSNTADSTELQ. The span at 861 to 882 shows a compositional bias: low complexity; sequence LSPNLSDSSPSSKKSEENSNSN. S866 is subject to Phosphoserine.

Belongs to the flavin monoamine oxidase family. As to quaternary structure, component of a complex that contains at least HDAC1/Rpd3, CoRest and Su(var)3-3/Hdm. FAD is required as a cofactor.

Its subcellular location is the nucleus. It localises to the chromosome. In terms of biological role, probable histone demethylase that specifically demethylates 'Lys-4' of histone H3, a specific tag for epigenetic transcriptional activation, thereby acting as a corepressor. Required for heterochromatic gene silencing. Acts by oxidizing the substrate by FAD to generate the corresponding imine that is subsequently hydrolyzed. Demethylates both mono- and tri-methylated 'Lys-4' of histone H3. May also demethylate 'Lys-9' of histone H3, Plays a role in the repression of neuronal genes. This chain is Possible lysine-specific histone demethylase 1 (Su(var)3-3), found in Drosophila melanogaster (Fruit fly).